Consider the following 400-residue polypeptide: Carnosine N-methyltransferase (400 aa).

Positions 1–49 (MQRRRRAPPASQPAQDSGHSEEVEVQFSAGRLGSAAPAGPPVRGTAEDE) are disordered. Positions 155, 158, 199, 220, 286, 287, and 303 each coordinate S-adenosyl-L-methionine. Asp-307 contacts carnosine. Tyr-315 serves as a coordination point for S-adenosyl-L-methionine. His-338 and Tyr-389 together coordinate carnosine.

Belongs to the carnosine N-methyltransferase family. As to quaternary structure, homodimer. Each monomer accommodates one molecule of carnosine in its active pocket, precisely anchoring the histidine imidazole ring such that only N1 is exposed and deprotonated for methylation. Expressed at higher level in skeletal muscle compared to other tissues.

It is found in the cytoplasm. It localises to the cytosol. The protein localises to the nucleus. The catalysed reaction is carnosine + S-adenosyl-L-methionine = anserine + S-adenosyl-L-homocysteine + H(+). Its function is as follows. N-methyltransferase that catalyzes the formation of anserine (beta-alanyl-N(Pi)-methyl-L-histidine) from carnosine. Anserine, a methylated derivative of carnosine (beta-alanyl-L-histidine), is an abundant constituent of vertebrate skeletal muscles. Also methylates other L-histidine-containing di- and tripeptides such as Gly-Gly-His, Gly-His and homocarnosine (GABA-His). The polypeptide is Carnosine N-methyltransferase (Rattus norvegicus (Rat)).